Here is a 799-residue protein sequence, read N- to C-terminus: ATP-dependent DNA helicase Hel308 (799 aa).

ATP is bound by residues Gln29 and 47–54; that span reads IPTASGKT. The 167-residue stretch at 34 to 200 folds into the Helicase ATP-binding domain; that stretch reads EAGVTEGENL…WLDAGLVDSD (167 aa). The DEAH box signature appears at 145 to 148; sequence DEVH. The Helicase C-terminal domain maps to 234 to 435; it reads QTAAIVRDTL…EPALRTHILA (202 aa). Disordered regions lie at residues 522 to 566 and 750 to 799; these read RGAS…DRDP and NVLE…LGDF. Residues 553-566 are compositionally biased toward acidic residues; sequence LAEDADESDADRDP.

The protein belongs to the helicase family. Hel308 subfamily. In terms of assembly, monomer.

The catalysed reaction is Couples ATP hydrolysis with the unwinding of duplex DNA by translocating in the 3'-5' direction.. It catalyses the reaction ATP + H2O = ADP + phosphate + H(+). Its function is as follows. DNA-dependent ATPase and 3'-5' DNA helicase that may be involved in repair of stalled replication forks. This Haloarcula marismortui (strain ATCC 43049 / DSM 3752 / JCM 8966 / VKM B-1809) (Halobacterium marismortui) protein is ATP-dependent DNA helicase Hel308.